A 166-amino-acid polypeptide reads, in one-letter code: NAD(P)H-quinone oxidoreductase subunit I, chloroplastic (166 aa).

4Fe-4S ferredoxin-type domains follow at residues 55–84 (GRIH…VDWK) and 95–124 (LNYS…MTEE). Cys-64, Cys-67, Cys-70, Cys-74, Cys-104, Cys-107, Cys-110, and Cys-114 together coordinate [4Fe-4S] cluster.

The protein belongs to the complex I 23 kDa subunit family. NDH is composed of at least 16 different subunits, 5 of which are encoded in the nucleus. [4Fe-4S] cluster is required as a cofactor.

The protein localises to the plastid. It localises to the chloroplast thylakoid membrane. The enzyme catalyses a plastoquinone + NADH + (n+1) H(+)(in) = a plastoquinol + NAD(+) + n H(+)(out). It catalyses the reaction a plastoquinone + NADPH + (n+1) H(+)(in) = a plastoquinol + NADP(+) + n H(+)(out). Functionally, NDH shuttles electrons from NAD(P)H:plastoquinone, via FMN and iron-sulfur (Fe-S) centers, to quinones in the photosynthetic chain and possibly in a chloroplast respiratory chain. The immediate electron acceptor for the enzyme in this species is believed to be plastoquinone. Couples the redox reaction to proton translocation, and thus conserves the redox energy in a proton gradient. The chain is NAD(P)H-quinone oxidoreductase subunit I, chloroplastic from Acanthospermum australe (Paraguayan starburr).